A 327-amino-acid chain; its full sequence is MGNLPEFSIRDLVEAGVHLGHKAGRWNPAMAPYIYGVHKYKDIHVIDLRKTLVLLRDALSVLYDVVLKRGRVLFVGTKVQASNIVAEEATRCGQYYVNHRWLGGMLTNWETVSSSIRRLVEFERLINNNEGQFTKKELLMLDKQRGKLERSLGGIREMGGLPHALFVIDTNKEHIAIREANKLKIPVVAILDTNSDPGGVDYPIPGNDDSVRSIDFFCRAVSRTILEAIRSDLASSGVNIAAKGSDVAESYAGTAADAGHTPVSETLSAGGPTAGASPYIPEVGPSVVEVDTHKSAALPDSRPNDADVPAEDGVLPDPGVADGAALE.

A disordered region spans residues Ala-258–Glu-327.

It belongs to the universal ribosomal protein uS2 family.

The sequence is that of Small ribosomal subunit protein uS2 from Anaplasma marginale (strain St. Maries).